A 328-amino-acid polypeptide reads, in one-letter code: GMP reductase (328 aa).

C176 serves as the catalytic Thioimidate intermediate. 205 to 228 (IIADGGIRTHGDVAKSIRFGATMV) serves as a coordination point for NADP(+).

Belongs to the IMPDH/GMPR family. GuaC type 2 subfamily.

The catalysed reaction is IMP + NH4(+) + NADP(+) = GMP + NADPH + 2 H(+). Catalyzes the irreversible NADPH-dependent deamination of GMP to IMP. It functions in the conversion of nucleobase, nucleoside and nucleotide derivatives of G to A nucleotides, and in maintaining the intracellular balance of A and G nucleotides. This chain is GMP reductase, found in Bacillus thuringiensis (strain Al Hakam).